The sequence spans 282 residues: Cytochrome c1 (282 aa).

Residues 1-24 (MTIKLRFVASLALVFGLAAASVPA) form the signal peptide. 4 residues coordinate heme c: cysteine 62, cysteine 65, histidine 66, and methionine 207. Residues 253 to 273 (WWVLGFLVIFTGLLVATKIVV) traverse the membrane as a helical segment.

The main subunits of complex b-c1 are: cytochrome b, cytochrome c1 and the Rieske protein. Binds 1 heme c group covalently per subunit.

It is found in the cell membrane. Functionally, component of the ubiquinol-cytochrome c reductase complex (complex III or cytochrome b-c1 complex), which is a respiratory chain that generates an electrochemical potential coupled to ATP synthesis. c1 functions as an electron donor to cytochrome c. The protein is Cytochrome c1 (petC) of Blastochloris viridis (Rhodopseudomonas viridis).